Reading from the N-terminus, the 92-residue chain is ADESALAQTKGCLACHNPEKKVVGPAYGWVAKKYAGQAGAEAKLVAKVMAGGQGVWAKQLGAEIPMPANNVTKEEATRLVKWVLSLKQIDYK.

Heme c is bound by residues Cys-12, Cys-15, His-16, and Met-66.

It belongs to the cytochrome c family. Post-translationally, binds 1 heme c group covalently per subunit.

In terms of biological role, cytochrome c2 is found mainly in purple, non-sulfur, photosynthetic bacteria where it functions as the electron donor to the oxidized bacteriochlorophyll in the photophosphorylation pathway. However, it may also have a role in the respiratory chain and is found in some non-photosynthetic bacteria. This Rhodocyclus tenuis (Rhodospirillum tenue) protein is Cytochrome c2.